Reading from the N-terminus, the 184-residue chain is Large ribosomal subunit protein bL9 (184 aa).

The segment at 160–184 is disordered; the sequence is LQNQKSEQQEAEQDANKEATDGDDS. The span at 173-184 shows a compositional bias: basic and acidic residues; the sequence is DANKEATDGDDS.

The protein belongs to the bacterial ribosomal protein bL9 family.

Functionally, binds to the 23S rRNA. The chain is Large ribosomal subunit protein bL9 from Wolbachia pipientis wMel.